Here is a 185-residue protein sequence, read N- to C-terminus: MRVMGVDPGLTRCGLSMIESGKGRQVIALDVDVVRTPADTPLQKRLLTISDAAEHWMDTHRPDVIAIERVFANQNANTAMGTAQAGGVIALAAAKRDIEVHFHTPSEVKAAVTGSGRADKSQVTEMVTRILALQAKPTPADAADALALAICHCWRAPMIARMAAAEAMAEEQRRKFQAKIKAARG.

Active-site residues include Asp7, Glu68, and Asp141. Mg(2+) contacts are provided by Asp7, Glu68, and Asp141.

Belongs to the RuvC family. As to quaternary structure, homodimer which binds Holliday junction (HJ) DNA. The HJ becomes 2-fold symmetrical on binding to RuvC with unstacked arms; it has a different conformation from HJ DNA in complex with RuvA. In the full resolvosome a probable DNA-RuvA(4)-RuvB(12)-RuvC(2) complex forms which resolves the HJ. Mg(2+) serves as cofactor.

Its subcellular location is the cytoplasm. The catalysed reaction is Endonucleolytic cleavage at a junction such as a reciprocal single-stranded crossover between two homologous DNA duplexes (Holliday junction).. Functionally, the RuvA-RuvB-RuvC complex processes Holliday junction (HJ) DNA during genetic recombination and DNA repair. Endonuclease that resolves HJ intermediates. Cleaves cruciform DNA by making single-stranded nicks across the HJ at symmetrical positions within the homologous arms, yielding a 5'-phosphate and a 3'-hydroxyl group; requires a central core of homology in the junction. The consensus cleavage sequence is 5'-(A/T)TT(C/G)-3'. Cleavage occurs on the 3'-side of the TT dinucleotide at the point of strand exchange. HJ branch migration catalyzed by RuvA-RuvB allows RuvC to scan DNA until it finds its consensus sequence, where it cleaves and resolves the cruciform DNA. The sequence is that of Crossover junction endodeoxyribonuclease RuvC from Mycolicibacterium smegmatis (strain ATCC 700084 / mc(2)155) (Mycobacterium smegmatis).